Consider the following 506-residue polypeptide: Maturase K (506 aa).

Belongs to the intron maturase 2 family. MatK subfamily.

Its subcellular location is the plastid. It localises to the chloroplast. Usually encoded in the trnK tRNA gene intron. Probably assists in splicing its own and other chloroplast group II introns. This Manihot esculenta (Cassava) protein is Maturase K.